We begin with the raw amino-acid sequence, 643 residues long: Cell pattern formation-associated protein asm-1 (643 aa).

The tract at residues 1–37 (MNPNTPADVYYGQMSQGSSMPVTTVPSHSHYASQQPP) is disordered. Residues 13-33 (QMSQGSSMPVTTVPSHSHYAS) are compositionally biased toward polar residues. The HTH APSES-type domain maps to 116–222 (RVTATLWEDE…HNIGALLYHP (107 aa)). Residues 150-171 (GTKLLNVAGMTRGRRDGILKSE) constitute a DNA-binding region (H-T-H motif). A disordered region spans residues 229–627 (SQVMAAAEQR…GSLPSPTYTA (399 aa)). The span at 306-335 (DGYQWSQQSMSGTQGNSSLSLDTSLGSNAR) shows a compositional bias: polar residues. Positions 336–349 (SMPSTPATTPPGST) are enriched in low complexity. Polar residues predominate over residues 350–367 (IQSMQNYPPVSQSYESSR). Residues 368-391 (QMYQGQSAQQAQYQSQQHYSSQPQ) are compositionally biased toward low complexity. Composition is skewed to polar residues over residues 471 to 481 (GSYNYNTQAVN), 529 to 551 (QPSS…TQGN), and 563 to 577 (SLPN…VMNG). The segment at 583–612 (KRGRDDDDDGGRPTTSAPNLGPGMDMKRRK) is nuclear localization domain.

Belongs to the EFG1/PHD1/stuA family.

The protein resides in the nucleus. Functionally, transcription factor that regulates asexual reproduction. Binds the StuA-response elements (StRE) with the consensus sequence 5'-(A/T)CGCG(T/A)N(A/C)-3' at the promoters of target genes. Required for rapid conidial germination, normal vegetative morphology, and protoperithecium formation. The protein is Cell pattern formation-associated protein asm-1 of Neurospora crassa (strain ATCC 24698 / 74-OR23-1A / CBS 708.71 / DSM 1257 / FGSC 987).